The chain runs to 27 residues: Carcinustatin-20 (27 aa).

Leu27 carries the post-translational modification Leucine amide.

This sequence belongs to the allatostatin family.

It is found in the secreted. Its function is as follows. May act as a neurotransmitter or neuromodulator. This chain is Carcinustatin-20, found in Carcinus maenas (Common shore crab).